Reading from the N-terminus, the 883-residue chain is MNEQYSALRSNVSMLGKVLGETIKDALGEHILERVETIRKLSKSSRAGNDANRQELLTTLQNLSNDELLPVARAFSQFLNLANTAEQYHSISPKGEAASNPEVIARTLRKLKNQPELSEDTIKKAVESLSLELVLTAHPTEITRRTLIHKMVEVNACLKQLDNKDIADYEHNQLMRRLRQLIAQSWHTDEIRKLRPSPVDEAKWGFAVVENSLWQGVPNYLRELNEQLEENLGYKLPVEFVPVRFTSWMGGDRDGNPNVTADITRHVLLLSRWKATDLFLKDIQVLVSELSMVEATPELLALVGEEGAAEPYRYLMKNLRSRLMATQAWLEARLKGEELPKPEGLLTQNEELWEPLYACYQSLQACGMGIIANGDLLDTLRRVKCFGVPLVRIDIRQESTRHTEALGELTRYLGIGDYESWSEADKQAFLIRELNSKRPLLPRNWQPSAETREVLDTCQVIAEAPQGSIAAYVISMAKTPSDVLAVHLLLKEAGIGFAMPVAPLFETLDDLNNANDVMTQLLNIDWYRGLIQGKQMVMIGYSDSAKDAGVMAASWAQYQAQDALIKTCEKAGIELTLFHGRGGSIGRGGAPAHAALLSQPPGSLKGGLRVTEQGEMIRFKYGLPEITVSSLSLYTGAILEANLLPPPEPKESWRRIMDELSVISCDLYRGYVRENKDFVPYFRSATPEQELGKLPLGSRPAKRRPTGGVESLRAIPWIFAWTQNRLMLPAWLGAGTALQKVVEDGKQSELEAMCRDWPFFSTRLGMLEMVFAKADLWLAEYYDQRLVDKTLWPLGKELRNLQEEDIKVVLAIANDSHLMADLPWIAESIQLRNIYTDPLNVLQAELLHRSRQAEKEGQEPDPRVEQALMVTIAGIAAGMRNTG.

Active-site residues include histidine 138 and lysine 546.

The protein belongs to the PEPCase type 1 family. As to quaternary structure, homotetramer. Mg(2+) serves as cofactor.

It carries out the reaction oxaloacetate + phosphate = phosphoenolpyruvate + hydrogencarbonate. The enzyme has distinct binding sites for each of the allosteric effectors such as acetyl-CoA, fructose 1,6-bisphosphate, guanosine 3'-diphosphate 5'-diphosphate, long chain fatty acids, and L-aspartate. Forms oxaloacetate, a four-carbon dicarboxylic acid source for the tricarboxylic acid cycle. The polypeptide is Phosphoenolpyruvate carboxylase (Escherichia coli O157:H7).